The primary structure comprises 1399 residues: DNA-directed RNA polymerase subunit beta' (1399 aa).

Residues Cys70, Cys72, Cys85, and Cys88 each coordinate Zn(2+). The Mg(2+) site is built by Asp460, Asp462, and Asp464. Zn(2+)-binding residues include Cys814, Cys888, Cys895, and Cys898.

This sequence belongs to the RNA polymerase beta' chain family. As to quaternary structure, the RNAP catalytic core consists of 2 alpha, 1 beta, 1 beta' and 1 omega subunit. When a sigma factor is associated with the core the holoenzyme is formed, which can initiate transcription. Mg(2+) serves as cofactor. Zn(2+) is required as a cofactor.

The catalysed reaction is RNA(n) + a ribonucleoside 5'-triphosphate = RNA(n+1) + diphosphate. In terms of biological role, DNA-dependent RNA polymerase catalyzes the transcription of DNA into RNA using the four ribonucleoside triphosphates as substrates. The chain is DNA-directed RNA polymerase subunit beta' from Pseudomonas syringae pv. syringae (strain B728a).